Consider the following 139-residue polypeptide: ATP synthase epsilon chain 2 (139 aa).

Belongs to the ATPase epsilon chain family. F-type ATPases have 2 components, CF(1) - the catalytic core - and CF(0) - the membrane proton channel. CF(1) has five subunits: alpha(3), beta(3), gamma(1), delta(1), epsilon(1). CF(0) has three main subunits: a, b and c.

It is found in the cell inner membrane. Functionally, produces ATP from ADP in the presence of a proton gradient across the membrane. This chain is ATP synthase epsilon chain 2, found in Paraburkholderia xenovorans (strain LB400).